Reading from the N-terminus, the 1069-residue chain is Carbamoyl phosphate synthase large chain (1069 aa).

The tract at residues 1–401 (MPLNKDIKRV…AFLKGIRSLE (401 aa)) is carboxyphosphate synthetic domain. Residues R129, R169, G175, G176, K208, V210, E215, G241, I242, H243, Q284, and E298 each coordinate ATP. An ATP-grasp 1 domain is found at 133–327 (RDMMNRIGEP…IAKLAAKIAL (195 aa)). Positions 284, 298, and 300 each coordinate Mg(2+). Mn(2+) contacts are provided by Q284, E298, and N300. Residues 402–549 (IGKYSLDHKK…YSTYEQYDEV (148 aa)) are oligomerization domain. The carbamoyl phosphate synthetic domain stretch occupies residues 550 to 932 (EVSNRRKVIV…ALYKGFVGAN (383 aa)). Residues 674–864 (DELLERLDIS…IVDIATQVML (191 aa)) form the ATP-grasp 2 domain. ATP-binding residues include R710, K749, L751, E755, G780, V781, H782, S783, Q823, and E835. Positions 823, 835, and 837 each coordinate Mg(2+). Mn(2+) is bound by residues Q823, E835, and N837. The 138-residue stretch at 932–1069 (NMYPSKEKGK…KDLEVFDITK (138 aa)) folds into the MGS-like domain. The tract at residues 933–1069 (MYPSKEKGKI…KDLEVFDITK (137 aa)) is allosteric domain.

It belongs to the CarB family. Composed of two chains; the small (or glutamine) chain promotes the hydrolysis of glutamine to ammonia, which is used by the large (or ammonia) chain to synthesize carbamoyl phosphate. Tetramer of heterodimers (alpha,beta)4. Mg(2+) is required as a cofactor. The cofactor is Mn(2+).

It catalyses the reaction hydrogencarbonate + L-glutamine + 2 ATP + H2O = carbamoyl phosphate + L-glutamate + 2 ADP + phosphate + 2 H(+). The catalysed reaction is hydrogencarbonate + NH4(+) + 2 ATP = carbamoyl phosphate + 2 ADP + phosphate + 2 H(+). It functions in the pathway amino-acid biosynthesis; L-arginine biosynthesis; carbamoyl phosphate from bicarbonate: step 1/1. It participates in pyrimidine metabolism; UMP biosynthesis via de novo pathway; (S)-dihydroorotate from bicarbonate: step 1/3. Its function is as follows. Large subunit of the glutamine-dependent carbamoyl phosphate synthetase (CPSase). CPSase catalyzes the formation of carbamoyl phosphate from the ammonia moiety of glutamine, carbonate, and phosphate donated by ATP, constituting the first step of 2 biosynthetic pathways, one leading to arginine and/or urea and the other to pyrimidine nucleotides. The large subunit (synthetase) binds the substrates ammonia (free or transferred from glutamine from the small subunit), hydrogencarbonate and ATP and carries out an ATP-coupled ligase reaction, activating hydrogencarbonate by forming carboxy phosphate which reacts with ammonia to form carbamoyl phosphate. This is Carbamoyl phosphate synthase large chain from Clostridium botulinum (strain Alaska E43 / Type E3).